The sequence spans 343 residues: Protein RecA (343 aa).

66–73 (GPESSGKT) is a binding site for ATP.

It belongs to the RecA family.

It localises to the cytoplasm. Can catalyze the hydrolysis of ATP in the presence of single-stranded DNA, the ATP-dependent uptake of single-stranded DNA by duplex DNA, and the ATP-dependent hybridization of homologous single-stranded DNAs. It interacts with LexA causing its activation and leading to its autocatalytic cleavage. The chain is Protein RecA from Dechloromonas aromatica (strain RCB).